Reading from the N-terminus, the 451-residue chain is MPFIPHTETDIQDMLAAIGVNDIEQLFDEIPSALRTGPLNLVPEAMSEMEITRLMHRRAAQDHVDLNFIGAGAYEHHIPAAVWQIATRGEFYSAYTPYQAEASQGTLQLVYEYQTMMTGLTGMDVSNASLYDGASALAEAVLMSVRANRKSKSHRVLMPATVNPVYRSVTRAIVHGQGIELVEVPFDPATGRVDPKSLAAFEGQDITALVIPQPNFFGVLEEADALTDWAHAQDAQVIGVVNPVSLALLKPPGEWGGKGADIVCGEGQPLGAPLSSGGPYFGFMCCRKEHVRQMPGRIVGRTLDADGRTGFVLTLQAREQHIRRSKATSNICTNQGLVVTAATIHMALLGPEGLERVAAACHANTHALIERLKPLGVTPAFAGEAFHEIAFRLPRPVRPVLDAMAQQGVLGGYALGDDYSDLGDLLLVCATETKTEADLDRYAEVMKAALA.

The protein belongs to the GcvP family. N-terminal subunit subfamily. As to quaternary structure, the glycine cleavage system is composed of four proteins: P, T, L and H. In this organism, the P 'protein' is a heterodimer of two subunits.

The enzyme catalyses N(6)-[(R)-lipoyl]-L-lysyl-[glycine-cleavage complex H protein] + glycine + H(+) = N(6)-[(R)-S(8)-aminomethyldihydrolipoyl]-L-lysyl-[glycine-cleavage complex H protein] + CO2. Functionally, the glycine cleavage system catalyzes the degradation of glycine. The P protein binds the alpha-amino group of glycine through its pyridoxal phosphate cofactor; CO(2) is released and the remaining methylamine moiety is then transferred to the lipoamide cofactor of the H protein. This Thioalkalivibrio sulfidiphilus (strain HL-EbGR7) protein is Probable glycine dehydrogenase (decarboxylating) subunit 1.